The primary structure comprises 40 residues: Large ribosomal subunit protein bL36 (40 aa).

This sequence belongs to the bacterial ribosomal protein bL36 family.

The protein is Large ribosomal subunit protein bL36 of Corynebacterium kroppenstedtii (strain DSM 44385 / JCM 11950 / CIP 105744 / CCUG 35717).